The sequence spans 2237 residues: Zinc finger protein 318 (2237 aa).

Composition is skewed to low complexity over residues 1–12 (MYRSGSRSSVSS) and 30–39 (GASSGPTRRP). Residues 1–221 (MYRSGSRSSV…DMDRDDLTDD (221 aa)) form a disordered region. The segment at 1–1114 (MYRSGSRSSV…THMHNKKHTQ (1114 aa)) is interaction with AR. Ser40 is subject to Phosphoserine. Residues 53–66 (PARRHRSPSGHRGR) are compositionally biased toward basic residues. Ser69, Ser109, and Ser111 each carry phosphoserine. Residues 140-156 (IRGESRADFARDGRGDH) show a composition bias toward basic and acidic residues. Residues Ser167 and Ser205 each carry the phosphoserine modification. The residue at position 237 (Tyr237) is a Phosphotyrosine. Phosphoserine is present on residues Ser239 and Ser246. The disordered stretch occupies residues 263-350 (LHRPEFSPQS…SPRFLDPEFR (88 aa)). Composition is skewed to basic and acidic residues over residues 274–290 (CHDELLRGTERNRDKLK) and 297–317 (RSEERSREAKRPRYDDTEKVH). Positions 321–332 (GDHSSFTSGTRN) are enriched in polar residues. Residues 348–376 (EFRELDLARRKREEEEEQSRSLSQELVGV) adopt a coiled-coil conformation. A phosphoserine mark is found at Ser497, Ser502, Ser531, and Ser557. Disordered regions lie at residues 551 to 612 (QEKR…ESLE) and 645 to 732 (QERL…TKNS). Residues 560-576 (DIEDEEKFLYGDEEEDI) are compositionally biased toward acidic residues. Residues Lys577, Lys583, Lys596, and Lys607 each participate in a glycyl lysine isopeptide (Lys-Gly) (interchain with G-Cter in SUMO2) cross-link. A compositionally biased stretch (basic and acidic residues) spans 577–586 (KSESPLKSLE). The span at 592–602 (GTRQKANSLPS) shows a compositional bias: polar residues. Composition is skewed to basic and acidic residues over residues 658–677 (SADRRLSADRHLSGDRHFSA) and 692–706 (RSSDPHRPESRETHH). Thr865 is modified (phosphothreonine). Residues 904–1003 (EKNRASQKQK…SELDKVAQIL (100 aa)) are a coiled coil. Basic and acidic residues-rich tracts occupy residues 945-964 (QQGEMLRKKRREKDGHKDPL), 1013-1037 (KSSNDSKESTEKPEKEKSKSPEKEL), and 1047-1056 (KESKMNEKSC). 2 disordered regions span residues 945-966 (QQGEMLRKKRREKDGHKDPLLM) and 1013-1072 (KSSN…TVKQ). Ser1032 carries the post-translational modification Phosphoserine. The span at 1058–1072 (KSPSSTESLQPTVKQ) shows a compositional bias: polar residues. Residue Ser1059 is modified to Phosphoserine. 2 Matrin-type zinc fingers span residues 1085–1119 (AGSHWCKDCNTTCGTMFDFFTHMHNKKHTQTLDPY) and 1158–1180 (FYCQLCEEFLGDPISGEQHVKGH). Disordered stretches follow at residues 1245–1289 (VKED…KKEP), 1302–1342 (SWKK…VGKA), and 1366–1395 (TTSTQTKIRPNLPIPSTVLRKSGSATVSKP). Basic and acidic residues-rich tracts occupy residues 1280 to 1289 (QVKEEVKKEP), 1304 to 1313 (KKPEKEEEKG), and 1321 to 1341 (PKEDTVETSKDRDDGKAEVGK). A Phosphoserine modification is found at Ser1445. Disordered regions lie at residues 1449 to 1497 (KVEL…LSAP), 1614 to 1651 (HETKLSSSTLANGESSSLPRTESSDFSSTCTLNSSMSS), 1727 to 1770 (TSGS…HCQT), and 1790 to 1867 (EVYQ…MTGH). Residues 1469 to 1490 (LPPPPPPPPPPPPPPPPPPPQA) show a composition bias toward pro residues. A compositionally biased stretch (polar residues) spans 1618–1639 (LSSSTLANGESSSLPRTESSDF). Positions 1640 to 1651 (SSTCTLNSSMSS) are enriched in low complexity. Residues 1734–1749 (DTHKDRPPEGKIRFDL) show a composition bias toward basic and acidic residues. A compositionally biased stretch (polar residues) spans 1757–1770 (TDSTSHLSDTHCQT). Residues 1796 to 1814 (GCRESEMKRKTELKGKVAT) are compositionally biased toward basic and acidic residues. Residues 1798 to 1827 (RESEMKRKTELKGKVATEEEEEEEEEGANS) are a coiled coil. Residues 1815–1824 (EEEEEEEEEG) show a composition bias toward acidic residues. Residues 1828–1840 (IEDSNSNHGNRNT) are compositionally biased toward polar residues. Residues Ser1878, Ser1908, Ser1988, Ser2044, Ser2054, Ser2140, Ser2143, Ser2194, and Ser2206 each carry the phosphoserine modification. The disordered stretch occupies residues 2039–2064 (EGAHSSSNSRNGRITSNSLETGHPVE). Polar residues predominate over residues 2041–2058 (AHSSSNSRNGRITSNSLE). The interval 2178 to 2237 (EDNDSALNLVKTPPSGSPSRDQVVGGNVSPREMPEQEAAVDVIPDHTRSNVYNSQDYLNG) is disordered. Residues 2226 to 2237 (SNVYNSQDYLNG) show a composition bias toward polar residues.

Homodimer. Heterodimer of isoform 1 and isoform 2. Isoform 1 and isoform 2 interact with AR. Isoform 1 and isoform 2 are highly expressed in testis, moderately expressed in adrenal gland and uterus and faintly expressed in brain, kidney and liver. Isoform 1 is expressed more in adrenal gland, uterus and liver than isoform 2 is. Expression during testicular development of isoform 1 and isoform 2 is restricted to spermatocytes at the pachytene stage of meiotic prophase and to round and elongated spermatids.

It is found in the nucleus. Acts as a transcriptional corepressor for AR-mediated transactivation function. May act as a transcriptional regulator during spermatogenesis and in particular, during meiotic division. Functionally, acts as a transcriptional coactivator for AR-mediated transactivation function. May act as a transcriptional regulator during spermatogenesis and in particular, during meiotic division. The polypeptide is Zinc finger protein 318 (Znf318) (Mus musculus (Mouse)).